The chain runs to 98 residues: NADH-ubiquinone oxidoreductase chain 4L (98 aa).

A run of 3 helical transmembrane segments spans residues 1 to 21 (MSMV…GLLM), 29 to 49 (SLLC…MTIL), and 61 to 81 (IILL…LVMV).

This sequence belongs to the complex I subunit 4L family. Core subunit of respiratory chain NADH dehydrogenase (Complex I) which is composed of 45 different subunits.

It localises to the mitochondrion inner membrane. The enzyme catalyses a ubiquinone + NADH + 5 H(+)(in) = a ubiquinol + NAD(+) + 4 H(+)(out). Functionally, core subunit of the mitochondrial membrane respiratory chain NADH dehydrogenase (Complex I) which catalyzes electron transfer from NADH through the respiratory chain, using ubiquinone as an electron acceptor. Part of the enzyme membrane arm which is embedded in the lipid bilayer and involved in proton translocation. The protein is NADH-ubiquinone oxidoreductase chain 4L (MT-ND4L) of Arctocephalus australis (South American fur seal).